A 191-amino-acid polypeptide reads, in one-letter code: Methylated-DNA--protein-cysteine methyltransferase (191 aa).

DNA is bound by residues Tyr-120 and Arg-134. The Nucleophile; methyl group acceptor role is filled by Cys-151.

It belongs to the MGMT family.

It is found in the nucleus. The enzyme catalyses a 6-O-methyl-2'-deoxyguanosine in DNA + L-cysteinyl-[protein] = S-methyl-L-cysteinyl-[protein] + a 2'-deoxyguanosine in DNA. The catalysed reaction is a 4-O-methyl-thymidine in DNA + L-cysteinyl-[protein] = a thymidine in DNA + S-methyl-L-cysteinyl-[protein]. Functionally, involved in the cellular defense against the biological effects of O6-methylguanine (O6-MeG) and O4-methylthymine (O4-MeT) in DNA. Repairs the methylated nucleobase in DNA by stoichiometrically transferring the methyl group to a cysteine residue in the enzyme. This is a suicide reaction: the enzyme is irreversibly inactivated. The sequence is that of Methylated-DNA--protein-cysteine methyltransferase (MGT1) from Debaryomyces hansenii (strain ATCC 36239 / CBS 767 / BCRC 21394 / JCM 1990 / NBRC 0083 / IGC 2968) (Yeast).